Here is a 1081-residue protein sequence, read N- to C-terminus: Serine/threonine-protein kinase PKH2 (1081 aa).

S138 carries the post-translational modification Phosphoserine. Residues F179 to F443 form the Protein kinase domain. Residues A189–S191 and K208 each bind ATP. The segment at L210–F255 is PIF-pocket. Residues E258–A260 and D264 contribute to the ATP site. The active-site Proton acceptor is D303. Residues E307 and D321 each coordinate ATP. The segment covering H494–E526 has biased composition (polar residues). Disordered regions lie at residues H494–M652, N805–S833, and I970–A1017. Residues I527–T538 are compositionally biased toward basic and acidic residues. 2 stretches are compositionally biased toward low complexity: residues A564–L575 and S582–P602. At S619 the chain carries Phosphoserine. Residues P632–T645 are compositionally biased toward pro residues. Polar residues-rich tracts occupy residues N805–P819 and H998–A1017. S1009 bears the Phosphoserine mark.

This sequence belongs to the protein kinase superfamily. AGC Ser/Thr protein kinase family. PDPK1 subfamily.

It is found in the nucleus. Its subcellular location is the cytoplasm. The protein resides in the cell cortex. The enzyme catalyses L-seryl-[protein] + ATP = O-phospho-L-seryl-[protein] + ADP + H(+). It catalyses the reaction L-threonyl-[protein] + ATP = O-phospho-L-threonyl-[protein] + ADP + H(+). Its activity is regulated as follows. Sphingoid base activates kinase activity. Its function is as follows. Serine/threonine-protein kinase which is part sphingolipid-mediated signaling pathway that is required for the internalization step of endocytosis by regulating eisosome assembly and organization, and modulating the organization of the plasma membrane. Phosphorylates and activates PKC1. Activates YPK1 and YPK2, 2 components of signaling cascade required for maintenance of cell wall integrity. Required for stress-induced P-body assembly and regulates global mRNA decay at the deadenylation step. In Saccharomyces cerevisiae (strain ATCC 204508 / S288c) (Baker's yeast), this protein is Serine/threonine-protein kinase PKH2 (PKH2).